The following is a 310-amino-acid chain: D-alanyl-D-alanine endopeptidase (310 aa).

The N-terminal stretch at 1-25 (MPKFRVSLFSLALMLAVPFAPQAVA) is a signal peptide. Residue Ser-67 is the Acyl-ester intermediate of the active site. Residue Lys-70 is the Proton acceptor of the active site. Residue Ser-124 is part of the active site. Lys-231 is a substrate binding site.

It belongs to the peptidase S11 family. In terms of processing, pbp8 is a proteolytic product of Pbp7.

It is found in the periplasm. Cell wall formation. May play a specialized role in remodeling the cell wall. Specifically hydrolyzes the DD-diaminopimelate-alanine bonds in high-molecular-mass murein sacculi. In Escherichia coli (strain K12), this protein is D-alanyl-D-alanine endopeptidase (pbpG).